Here is a 322-residue protein sequence, read N- to C-terminus: Protein mono-ADP-ribosyltransferase PARP16 (322 aa).

Residues 1–287 lie on the Cytoplasmic side of the membrane; sequence MQPSGWAAAR…RASSQLSWFS (287 aa). Positions 5 to 91 constitute a PARP alpha-helical domain; it reads GWAAAREAAG…AWDLVSWILS (87 aa). Asp-37 carries the post-translational modification ADP-ribosyl aspartic acid. ADP-ribosyl glutamic acid is present on Glu-70. A PARP catalytic domain is found at 94-279; the sequence is VLTIHSAGKA…VYSQKPPKRA (186 aa). Residues Lys-110 and Lys-137 each carry the N6-(ADP-ribosyl)lysine modification. Residues His-152, Tyr-182, and Tyr-254 each contribute to the NAD(+) site. The chain crosses the membrane as a helical span at residues 288 to 308; sequence SHWFTVMISLYLLLLLIVSVI. Residues 309–322 lie on the Lumenal side of the membrane; sequence NSSAFQHFWNRAKR.

This sequence belongs to the ARTD/PARP family. As to quaternary structure, interacts with KPNB1. In terms of processing, auto-mono-ADP-ribosylated.

The protein resides in the endoplasmic reticulum membrane. The catalysed reaction is L-aspartyl-[protein] + NAD(+) = 4-O-(ADP-D-ribosyl)-L-aspartyl-[protein] + nicotinamide. The enzyme catalyses L-glutamyl-[protein] + NAD(+) = 5-O-(ADP-D-ribosyl)-L-glutamyl-[protein] + nicotinamide. It catalyses the reaction L-lysyl-[protein] + NAD(+) = N(6)-(ADP-D-ribosyl)-L-lysyl-[protein] + nicotinamide + H(+). Its activity is regulated as follows. In absence of activation signal, PARP16 is autoinhibited by the PARP alpha-helical domain (also named HD region), which prevents effective NAD(+)-binding. Activity is highly stimulated by signals, which unfold the PARP alpha-helical domain, relieving autoinhibition. Functionally, intracellular mono-ADP-ribosyltransferase that plays a role in different processes, such as protein translation and unfolded protein response (UPR), through the mono-ADP-ribosylation of proteins involved in those processes. Acts as an inhibitor of protein translation by catalyzing mono-ADP-ribosylation of ribosomal subunits, such as RPL14 and RPS6, thereby inhibiting polysome assembly and mRNA loading. Mono-ADP-ribosylation of ribosomal subunits is promoted by NMNAT2. Involved in the unfolded protein response (UPR) by ADP-ribosylating and activating EIF2AK3 and ERN1, two important UPR effectors. May also mediate mono-ADP-ribosylation of karyopherin KPNB1 a nuclear import factor. May not modify proteins on arginine or cysteine residues compared to other mono-ADP-ribosyltransferases. This chain is Protein mono-ADP-ribosyltransferase PARP16, found in Homo sapiens (Human).